A 142-amino-acid polypeptide reads, in one-letter code: Baculoviral IAP repeat-containing protein 5 (142 aa).

One copy of the BIR repeat lies at 18–88 (RVSTFKNWPF…KHSSGCAFLS (71 aa)). Phosphoserine; by AURKC is present on serine 20. Lysine 23 carries the post-translational modification N6-acetyllysine. A Phosphothreonine; by CDK1 and CDK15 modification is found at threonine 34. Threonine 48 is subject to Phosphothreonine. Positions 57, 60, 77, and 84 each coordinate Zn(2+). Residues lysine 90, lysine 110, lysine 112, and lysine 115 each carry the N6-acetyllysine modification. Threonine 117 bears the Phosphothreonine; by AURKB mark. Lysine 129 carries the post-translational modification N6-acetyllysine.

It belongs to the IAP family. In terms of assembly, monomer or homodimer. Exists as a homodimer in the apo state and as a monomer in the CPC-bound state. The monomer protects cells against apoptosis more efficiently than the dimer. Only the dimeric form is capable of enhancing tubulin stability in cells. When phosphorylated, interacts with LAMTOR5/HBXIP; the resulting complex binds pro-CASP9, as well as active CASP9, but much less efficiently. Component of the chromosomal passenger complex (CPC) composed of at least BIRC5/survivin, CDCA8/borealin, INCENP, AURKB or AURKC; in the complex forms a triple-helix bundle-based subcomplex with INCENP and CDCA8. Interacts with JTB. Interacts (via BIR domain) with histone H3 phosphorylated at 'Thr-3' (H3pT3). Interacts with EVI5. Interacts with GTP-bound RAN in both the S and M phases of the cell cycle. Interacts with USP9X. Interacts with tubulin. Interacts with BIRC2/c-IAP1. The acetylated form at Lys-129 interacts with STAT3. The monomeric form deacetylated at Lys-129 interacts with XPO1/CRM1. The monomeric form interacts with XIAP/BIRC4. Both the dimeric and monomeric form can interact with DIABLO/SMAC. Interacts with BIRC6/bruce. Interacts with FBXL7; this interaction facilitates the polyubiquitination and subsequent proteasomal degradation of BIRC5 by the SCF(FBXL7) E3 ubiquitin-protein ligase complex. In terms of processing, ubiquitinated by the Cul9-RING ubiquitin-protein ligase complex, leading to its degradation. Ubiquitination is required for centrosomal targeting. Deubiquitinated by USP35 or USP38; leading to stabilization. Acetylation at Lys-129 results in its homodimerization, while deacetylation promotes the formation of monomers which heterodimerize with XPO1/CRM1 which facilitates its nuclear export. The acetylated form represses STAT3 transactivation. The dynamic equilibrium between its acetylation and deacetylation at Lys-129 determines its interaction with XPO1/CRM1, its subsequent subcellular localization, and its ability to inhibit STAT3 transactivation. Post-translationally, in vitro phosphorylation at Thr-117 by AURKB prevents interaction with INCENP and localization to mitotic chromosomes. Phosphorylation at Thr-48 by CK2 is critical for its mitotic and anti-apoptotic activities. Phosphorylation at Thr-34 by CDK15 is critical for its anti-apoptotic activity. Phosphorylation at Ser-20 by AURKC is critical for regulation of proper chromosome alignment and segregation, and possibly cytokinesis.

Its subcellular location is the cytoplasm. The protein resides in the nucleus. It is found in the chromosome. The protein localises to the centromere. It localises to the cytoskeleton. Its subcellular location is the spindle. The protein resides in the kinetochore. It is found in the midbody. Functionally, multitasking protein that has dual roles in promoting cell proliferation and preventing apoptosis. Component of a chromosome passage protein complex (CPC) which is essential for chromosome alignment and segregation during mitosis and cytokinesis. Acts as an important regulator of the localization of this complex; directs CPC movement to different locations from the inner centromere during prometaphase to midbody during cytokinesis and participates in the organization of the center spindle by associating with polymerized microtubules. Involved in the recruitment of CPC to centromeres during early mitosis via association with histone H3 phosphorylated at 'Thr-3' (H3pT3) during mitosis. The complex with RAN plays a role in mitotic spindle formation by serving as a physical scaffold to help deliver the RAN effector molecule TPX2 to microtubules. May counteract a default induction of apoptosis in G2/M phase. The acetylated form represses STAT3 transactivation of target gene promoters. May play a role in neoplasia. Inhibitor of CASP3 and CASP7. Essential for the maintenance of mitochondrial integrity and function. This is Baculoviral IAP repeat-containing protein 5 (BIRC5) from Bos taurus (Bovine).